A 182-amino-acid polypeptide reads, in one-letter code: Aralkylamine dehydrogenase light chain (182 aa).

Residues 1 to 47 (MRWLDKFGESLSRSVAHKTSRRSVLRSVGKLMVGSAFVLPVLPVARA) constitute a signal peptide (tat-type signal). 7 cysteine pairs are disulfide-bonded: cysteine 75-cysteine 140, cysteine 81-cysteine 113, cysteine 88-cysteine 171, cysteine 90-cysteine 138, cysteine 91-cysteine 135, cysteine 98-cysteine 129, and cysteine 130-cysteine 161. Aspartate 84 serves as a coordination point for substrate. Residue tryptophan 109 is the Tryptophylquinone 6'-substrate hemiaminal intermediate of the active site. The residue at position 109 (tryptophan 109) is a Tryptophylquinone. The tryptophan tryptophylquinone (Trp-Trp) cross-link spans 109-160 (WIGTCHNPHDGKDYLISYHDCCGKTACGRCQCNTQTRERPGYEFFLHNDVNW). Aspartate 128 (proton acceptor) is an active-site residue. 156 to 158 (NDV) contributes to the substrate binding site.

This sequence belongs to the aromatic amine dehydrogenase light chain family. Heterotetramer of two light and two heavy chains. Binds two azurin molecules per heterotetramer. It depends on tryptophan tryptophylquinone residue as a cofactor. Tryptophan tryptophylquinone (TTQ) is formed by oxidation of the indole ring of a tryptophan to form tryptophylquinone followed by covalent cross-linking with another tryptophan residue. Post-translationally, predicted to be exported by the Tat system. The position of the signal peptide cleavage has been experimentally proven.

It localises to the periplasm. The enzyme catalyses an aralkylamine + 2 oxidized [azurin] + H2O = an aromatic aldehyde + 2 reduced [azurin] + NH4(+) + 2 H(+). With respect to regulation, irreversibly inhibited by phenylhydrazine, hydroxylamine, semicarbazide, hydrazine and aminoguanidine. Reversibly inhibited by isonicotinic acid hydrazide (isoniazid) and isonicotinic acid 2-isopropyl hydrazide (iproniazid). Functionally, oxidizes primary aromatic amines and, more slowly, some long-chain aliphatic amines, but not methylamine or ethylamine. Uses azurin as an electron acceptor to transfer electrons from the reduced tryptophylquinone cofactor. The protein is Aralkylamine dehydrogenase light chain of Alcaligenes faecalis.